Consider the following 550-residue polypeptide: Genetic interactor of prohibitins 3, mitochondrial (550 aa).

The N-terminal 43 residues, 1-43, are a transit peptide targeting the mitochondrion; sequence MKSRLQAFKQFTRFVSCKSCGVELQSKNPSVTGYYKPPRAVRK. A CP-type G domain is found at 107 to 298; that stretch reads IHSFNDIKGA…VNDLPGYTMD (192 aa).

The protein belongs to the TRAFAC class YlqF/YawG GTPase family. GEP3 subfamily.

The protein localises to the mitochondrion. May be involved in the mitochondrial lipid metabolism. The sequence is that of Genetic interactor of prohibitins 3, mitochondrial (GEP3) from Kluyveromyces lactis (strain ATCC 8585 / CBS 2359 / DSM 70799 / NBRC 1267 / NRRL Y-1140 / WM37) (Yeast).